Here is a 558-residue protein sequence, read N- to C-terminus: Outer membrane transporter CdiB (558 aa).

An N-terminal signal peptide occupies residues 1 to 25; sequence MFVSSRKTGLIVCFSLIGYTASAFS. Positions 34-62 form a coiled coil; sequence NETQQRQSEVIEQSRQQREALQQLNNIVQ. Residues 76–151 form the POTRA domain; the sequence is FTLREIRFNH…GVLQLEILEG (76 aa).

Belongs to the TPS (TC 1.B.20) family.

Its subcellular location is the cell outer membrane. Probable outer membrane protein component of a toxin-immunity protein module, which functions as a cellular contact-dependent growth inhibition (CDI) system. CDI modules allow bacteria to communicate with and inhibit the growth of closely related neighboring bacteria in a contact-dependent fashion. This protein may be required for secretion and assembly of the CdiA toxin. Its function is as follows. Probable member of a two partner secretion pathway (TPS) in which it mediates the secretion of CdiA. This chain is Outer membrane transporter CdiB (cdiB), found in Dickeya dadantii (strain 3937) (Erwinia chrysanthemi (strain 3937)).